The chain runs to 520 residues: 4-hydroxyphenylacetate 3-monooxygenase oxygenase component (520 aa).

It belongs to the FADH(2)-utilizing monooxygenase family. In terms of assembly, 4-HPA 3-monooxygenase consists of a reductase component HpaC and an oxygenase component HpaB.

The catalysed reaction is 4-hydroxyphenylacetate + FADH2 + O2 = 3,4-dihydroxyphenylacetate + FAD + H2O + H(+). It participates in aromatic compound metabolism; 4-hydroxyphenylacetate degradation; pyruvate and succinate semialdehyde from 4-hydroxyphenylacetate: step 1/7. In terms of biological role, utilizes FADH(2) supplied by HpaC or by another flavin reductase, to catalyze the hydroxylation of 4-hydroxyphenylacetic acid, leading to the production of 3,4-DHPA. Can also oxidize phenol to catechol, and hydroxylate other phenol derivatives. In Escherichia coli, this protein is 4-hydroxyphenylacetate 3-monooxygenase oxygenase component (hpaB).